Here is a 128-residue protein sequence, read N- to C-terminus: MSNVPTELKYALSHEWVRADGDGVYSVGITEHAQELLGDMVFVDLPEVGSDVSAGSDCAVAESVKAASDIYAPISGEIVAVNTELENSPELVNSAPYTDGWLFSIKAADESELDNLLDADAYLAAIEE.

Residues 24–106 enclose the Lipoyl-binding domain; that stretch reads VYSVGITEHA…YTDGWLFSIK (83 aa). An N6-lipoyllysine modification is found at Lys-65.

This sequence belongs to the GcvH family. As to quaternary structure, the glycine cleavage system is composed of four proteins: P, T, L and H. (R)-lipoate is required as a cofactor.

In terms of biological role, the glycine cleavage system catalyzes the degradation of glycine. The H protein shuttles the methylamine group of glycine from the P protein to the T protein. The protein is Glycine cleavage system H protein of Yersinia pseudotuberculosis serotype O:1b (strain IP 31758).